Reading from the N-terminus, the 934-residue chain is Intimin (934 aa).

The N-terminal stretch at 1-39 is a signal peptide; the sequence is MITHGCYTRTRHKHKLKKTLIMLSAGLGLFFYVNQNSFA. The segment at 40–153 is peptidoglycan-binding; sequence NGENYFKLGS…KLTKMSPDVT (114 aa). The sufficient for homodimerization stretch occupies residues 40-153; it reads NGENYFKLGS…KLTKMSPDVT (114 aa). A required for periplasmic localization region spans residues 40–212; the sequence is NGENYFKLGS…LQAWLQHYGT (173 aa). One can recognise a LysM domain in the interval 63 to 112; sequence LFYTLKTGETVADLSKSQDINLSTIWSLNKHLYSSESEMMKAAPGQQIIL. An inverse autotransporter region spans residues 210–411; sequence YGTAEVNLQS…LYSMQFRYQF (202 aa). The tract at residues 402–411 is signature sequence for beta-barrel assembly machinery (BAM), which recognizes the unfolded beta-barrel in the periplasm; sequence LYSMQFRYQF. Residues 437–449 form a minimum linker residues necessary for formation of a heat-modifiable beta-barrel region; sequence LVQRNNNIILEYK. Big-1 domains lie at 560 to 653 and 660 to 753; these read VTDF…VIFF and ITEI…VTFF. The segment at 747 to 934 is intimin receptor Tir-binding; it reads ATEVTFFDEL…TPNVYAVCVE (188 aa). Positions 787–833 constitute a BIG2 domain; it reads ASGGDGTYSWYSENTSIATVDASGKVTLNGKGSVVIKATSGDKQTVS. Cys858 and Cys932 are joined by a disulfide.

This sequence belongs to the intimin/invasin family. In terms of assembly, homodimer. Interacts with Tir.

It localises to the cell outer membrane. Its function is as follows. An inverse autotransporter. Adhesin, which mediates attachment to the human intestine epithelial cells. Necessary for the production of attaching and effacing lesions on infected human tissue culture cells. Anchored to the outer membrane by binding to peptidoglycan (PGN) via its periplasmic domain, thus helping in receptor interactions during host invasion. PGN-binding may also aid in resisting mechanical and chemical stress during transit of the bacterium through the gastrointestinal tract of the host. In Escherichia coli O157:H7, this protein is Intimin.